Reading from the N-terminus, the 29-residue chain is Cyclotide cter-N (29 aa).

Residues 1 to 29 (GSAFCGETCVLGTCYTPDCSCTALVCLKN) constitute a cross-link (cyclopeptide (Gly-Asn)). Intrachain disulfides connect cysteine 5–cysteine 19, cysteine 9–cysteine 21, and cysteine 14–cysteine 26.

This is a cyclic peptide.

The protein localises to the secreted. Functionally, probably participates in a plant defense mechanism. The sequence is that of Cyclotide cter-N from Clitoria ternatea (Butterfly pea).